The sequence spans 795 residues: Lon protease (795 aa).

The region spanning 11–203 (GRVIPVSDIV…KFIDYLLKQK (193 aa)) is the Lon N-terminal domain. 356–363 (GPPGVGKT) is an ATP binding site. Positions 593 to 771 (DNVPGVVTGL…EDVLRETLGI (179 aa)) constitute a Lon proteolytic domain. Residues Ser-677 and Lys-720 contribute to the active site.

The protein belongs to the peptidase S16 family. As to quaternary structure, homohexamer. Organized in a ring with a central cavity.

It is found in the cytoplasm. The enzyme catalyses Hydrolysis of proteins in presence of ATP.. In terms of biological role, ATP-dependent serine protease that mediates the selective degradation of mutant and abnormal proteins as well as certain short-lived regulatory proteins. Required for cellular homeostasis and for survival from DNA damage and developmental changes induced by stress. Degrades polypeptides processively to yield small peptide fragments that are 5 to 10 amino acids long. Binds to DNA in a double-stranded, site-specific manner. In Clostridium beijerinckii (strain ATCC 51743 / NCIMB 8052) (Clostridium acetobutylicum), this protein is Lon protease.